The sequence spans 424 residues: CinA-like protein (424 aa).

The protein belongs to the CinA family.

This chain is CinA-like protein, found in Shewanella baltica (strain OS155 / ATCC BAA-1091).